We begin with the raw amino-acid sequence, 360 residues long: Peptide chain release factor 1 (360 aa).

Gln237 is modified (N5-methylglutamine).

Belongs to the prokaryotic/mitochondrial release factor family. In terms of processing, methylated by PrmC. Methylation increases the termination efficiency of RF1.

Its subcellular location is the cytoplasm. Peptide chain release factor 1 directs the termination of translation in response to the peptide chain termination codons UAG and UAA. This chain is Peptide chain release factor 1, found in Pseudomonas fluorescens (strain ATCC BAA-477 / NRRL B-23932 / Pf-5).